Consider the following 590-residue polypeptide: MSNPAKSEQSAGHDVKVGKRLMGYLRPELRIFIAAILAMAVVAASEGVIPKVVNDLLDKGFGGEYAGKLWHVPAILTGVALIRGVAQFASGYLLSLISNRVLLKMRMQMFDRMLHAPAHFYHRNTAASLINAVIFEVNQVLSILTSVFITLVRDSLTVVALLIYLFYTNWRLTLIVSVILPVIGYLMSKINRRLRRLNRDHQTLTNSAAYVVEEAAGGYKVVKLHGGEAYEMNRFRNMADRLKNYSMRMAVAGGLNQPVTAFLAALALSVIITIAMIQAQGNQTTIGGFTGFVMAMLLLISPLKHLTDINQPLTRGLTAAELIFRLIDEPVEPQDGGVRLERAKGDLVFERVGFRYGEGTRPALEGIDIRVPAGEVVALVGPSGSGKTTLVNLVPRFFDPTDGRILLDGHAIGDIALRELRNQIAFVSQDVVLFNDTVAANVAYGARSEEEIDMARVERALQAAYLTEVVKNLPEGVNTNIGDNGMKLSGGQRQRLAIARAIYKDAPILILDEATSALDSESERQVQAALEALMVGRTTLVIAHRLSTIENADRIVVLDHGRVAEHGTHEELLAANGLYAGLHRIQFATH.

A run of 6 helical transmembrane segments spans residues I31 to K51, A74 to L94, A132 to V152, V159 to I179, V259 to A279, and I286 to L306. The ABC transmembrane type-1 domain occupies I33–R315. The 239-residue stretch at L347–I585 folds into the ABC transporter domain. An ATP-binding site is contributed by G381–T388.

This sequence belongs to the ABC transporter superfamily. Lipid exporter (TC 3.A.1.106) family. Homodimer.

Its subcellular location is the cell inner membrane. The catalysed reaction is ATP + H2O + lipid A-core oligosaccharideSide 1 = ADP + phosphate + lipid A-core oligosaccharideSide 2.. In terms of biological role, involved in lipopolysaccharide (LPS) biosynthesis. Translocates lipid A-core from the inner to the outer leaflet of the inner membrane. Transmembrane domains (TMD) form a pore in the inner membrane and the ATP-binding domain (NBD) is responsible for energy generation. The chain is ATP-dependent lipid A-core flippase from Cupriavidus pinatubonensis (strain JMP 134 / LMG 1197) (Cupriavidus necator (strain JMP 134)).